A 304-amino-acid polypeptide reads, in one-letter code: Ribosomal protein L11 methyltransferase (304 aa).

Positions 152, 173, 195, and 234 each coordinate S-adenosyl-L-methionine.

Belongs to the methyltransferase superfamily. PrmA family.

It is found in the cytoplasm. The enzyme catalyses L-lysyl-[protein] + 3 S-adenosyl-L-methionine = N(6),N(6),N(6)-trimethyl-L-lysyl-[protein] + 3 S-adenosyl-L-homocysteine + 3 H(+). Methylates ribosomal protein L11. In Cupriavidus metallidurans (strain ATCC 43123 / DSM 2839 / NBRC 102507 / CH34) (Ralstonia metallidurans), this protein is Ribosomal protein L11 methyltransferase.